The primary structure comprises 217 residues: Claudin-9 (217 aa).

Over 1–12 (MASTGLELLGMT) the chain is Cytoplasmic. A helical membrane pass occupies residues 13–33 (LAVLGWLGTLVSCALPLWKVT). The Extracellular segment spans residues 34–81 (AFIGNSIVVAQVVWEGLWMSCVVQSTGQMQCKVYDSLLALPQDLQAAR). A helical transmembrane segment spans residues 82-102 (ALCVVALLLALLGLLVAITGA). Topologically, residues 103-116 (QCTTCVEDEGAKAR) are cytoplasmic. The chain crosses the membrane as a helical span at residues 117–137 (IVLTAGVLLLLSGILVLIPVC). Residues 138–159 (WTAHAIIQDFYNPLVAEALKRE) are Extracellular-facing. A helical transmembrane segment spans residues 160–180 (LGASLYLGWAAAALLMLGGGL). The Cytoplasmic portion of the chain corresponds to 181–217 (LCCTCPPSHFERPRGPRLGYSIPSRSGASGLDKRDYV).

The protein belongs to the claudin family. As to quaternary structure, interacts with CLDN1, CD81 and OCLN.

The protein resides in the cell junction. It localises to the tight junction. The protein localises to the cell membrane. Functionally, plays a major role in tight junction-specific obliteration of the intercellular space, through calcium-independent cell-adhesion activity. The chain is Claudin-9 (Cldn9) from Mus musculus (Mouse).